A 148-amino-acid polypeptide reads, in one-letter code: SsrA-binding protein (148 aa).

The tract at residues 129–148 (ETEKDRDWQREKARLMREKA) is disordered.

It belongs to the SmpB family.

The protein localises to the cytoplasm. Functionally, required for rescue of stalled ribosomes mediated by trans-translation. Binds to transfer-messenger RNA (tmRNA), required for stable association of tmRNA with ribosomes. tmRNA and SmpB together mimic tRNA shape, replacing the anticodon stem-loop with SmpB. tmRNA is encoded by the ssrA gene; the 2 termini fold to resemble tRNA(Ala) and it encodes a 'tag peptide', a short internal open reading frame. During trans-translation Ala-aminoacylated tmRNA acts like a tRNA, entering the A-site of stalled ribosomes, displacing the stalled mRNA. The ribosome then switches to translate the ORF on the tmRNA; the nascent peptide is terminated with the 'tag peptide' encoded by the tmRNA and targeted for degradation. The ribosome is freed to recommence translation, which seems to be the essential function of trans-translation. The sequence is that of SsrA-binding protein from Ralstonia nicotianae (strain ATCC BAA-1114 / GMI1000) (Ralstonia solanacearum).